The primary structure comprises 87 residues: U3-theraphotoxin-Hhn1a 13 (87 aa).

The signal sequence occupies residues 1 to 24 (MVNMKASMFLTSAGLVPLFVVCYA). Positions 25–52 (SESEEKEFPKEMLSSIFAVDNDFKQEER) are excised as a propeptide. Intrachain disulfides connect cysteine 54/cysteine 67, cysteine 61/cysteine 72, and cysteine 66/cysteine 79.

It belongs to the neurotoxin 10 (Hwtx-1) family. 51 (Hntx-8) subfamily. Hntx-8 sub-subfamily. As to expression, expressed by the venom gland.

Its subcellular location is the secreted. Functionally, ion channel inhibitor. This is U3-theraphotoxin-Hhn1a 13 from Cyriopagopus hainanus (Chinese bird spider).